The primary structure comprises 274 residues: Sulfur carrier protein FdhD (274 aa).

Cysteine 121 acts as the Cysteine persulfide intermediate in catalysis. A Mo-bis(molybdopterin guanine dinucleotide)-binding site is contributed by 258–263 (FSKPGR).

Belongs to the FdhD family.

The protein localises to the cytoplasm. Required for formate dehydrogenase (FDH) activity. Acts as a sulfur carrier protein that transfers sulfur from IscS to the molybdenum cofactor prior to its insertion into FDH. The polypeptide is Sulfur carrier protein FdhD (Yersinia pestis bv. Antiqua (strain Antiqua)).